The primary structure comprises 362 residues: MTTPLTLENIRRAPKALLHDHLDGGLRPSTVLELAEQYGYDDLPAHDADELAEFFRTAAHSGSLVRYLEPFAHTVGVMQNHDALHRVARECVEDLADDNVVYAEIRFAPELHIDGGLSLDAVVEAVLAGFADGEKAAAAAGRTITVRCLVTAMRHAARSREIAALAIRFRDQGVVGFDIAGAEAGYPPSRHLDAFEYMRSNNARFTIHAGEAFGLPSIHEAIAFCGADRLGHGVRIVDDIDMDAEGGPKLGRLAALLRDKRIPFEMCPSSNVQTGAVASIAEHPFDRLARLRFRVTVNTDNRLMSDTTMSLEMLRLVEAFGYGWSDLERFTINAMKSAFISFPERLAIIDEVIKPRYAVLVG.

Zn(2+) contacts are provided by histidine 19 and histidine 21. Substrate is bound by residues histidine 21, aspartate 23, and glycine 181. A Zn(2+)-binding site is contributed by histidine 208. Residue glutamate 211 is the Proton donor of the active site. A Zn(2+)-binding site is contributed by aspartate 300.

This sequence belongs to the metallo-dependent hydrolases superfamily. Adenosine and AMP deaminases family. Adenosine deaminase subfamily. Requires Zn(2+) as cofactor.

It carries out the reaction adenosine + H2O + H(+) = inosine + NH4(+). It catalyses the reaction 2'-deoxyadenosine + H2O + H(+) = 2'-deoxyinosine + NH4(+). In terms of biological role, catalyzes the hydrolytic deamination of adenosine and 2-deoxyadenosine. In Mycolicibacterium gilvum (strain PYR-GCK) (Mycobacterium gilvum (strain PYR-GCK)), this protein is Adenosine deaminase.